Reading from the N-terminus, the 245-residue chain is 2,3-bisphosphoglycerate-dependent phosphoglycerate mutase (245 aa).

Residues 8 to 15, 21 to 22, R60, 87 to 90, K98, 114 to 115, and 183 to 184 each bind substrate; these read RHGQSLWN, TG, ERHY, RR, and GN. H9 (tele-phosphohistidine intermediate) is an active-site residue. Catalysis depends on E87, which acts as the Proton donor/acceptor.

This sequence belongs to the phosphoglycerate mutase family. BPG-dependent PGAM subfamily.

It catalyses the reaction (2R)-2-phosphoglycerate = (2R)-3-phosphoglycerate. It functions in the pathway carbohydrate degradation; glycolysis; pyruvate from D-glyceraldehyde 3-phosphate: step 3/5. In terms of biological role, catalyzes the interconversion of 2-phosphoglycerate and 3-phosphoglycerate. This Bacillus cereus (strain B4264) protein is 2,3-bisphosphoglycerate-dependent phosphoglycerate mutase.